A 236-amino-acid polypeptide reads, in one-letter code: Small ribosomal subunit protein uS2c (236 aa).

It belongs to the universal ribosomal protein uS2 family.

Its subcellular location is the plastid. The protein localises to the chloroplast. In Nicotiana tabacum (Common tobacco), this protein is Small ribosomal subunit protein uS2c (rps2).